Reading from the N-terminus, the 53-residue chain is Light-harvesting protein B-808/866 beta chain (53 aa).

Met-1 carries the post-translational modification N-formylmethionine. Topologically, residues 1–25 are cytoplasmic; that stretch reads MRDDDDLVPPKWRPLFNNQDWLLHD. Positions 24 and 42 each coordinate a bacteriochlorophyll. Residues 26 to 48 form a helical membrane-spanning segment; that stretch reads IVVKSFYGFGVIAAIAHLLVYLW. Over 49–53 the chain is Periplasmic; sequence KPWLP.

Belongs to the antenna complex beta subunit family. As to quaternary structure, the core complex is formed by different alpha and beta chains, binding bacteriochlorophyll molecules, and arranged most probably in tetrameric structures disposed around the reaction center. The non-pigmented gamma chains may constitute additional components.

Its subcellular location is the cell membrane. Its function is as follows. Antenna complexes are light-harvesting systems, which transfer the excitation energy to the reaction centers. The chain is Light-harvesting protein B-808/866 beta chain (puf2B) from Chloroflexus aurantiacus (strain ATCC 29366 / DSM 635 / J-10-fl).